A 343-amino-acid chain; its full sequence is Cytoplasmic tRNA 2-thiolation protein 1 (343 aa).

It belongs to the TtcA family. CTU1/NCS6/ATPBD3 subfamily.

The protein localises to the cytoplasm. The protein operates within tRNA modification; 5-methoxycarbonylmethyl-2-thiouridine-tRNA biosynthesis. Plays a central role in 2-thiolation of mcm(5)S(2)U at tRNA wobble positions of tRNA(Lys), tRNA(Glu) and tRNA(Gln). Directly binds tRNAs and probably acts by catalyzing adenylation of tRNAs, an intermediate required for 2-thiolation. It is unclear whether it acts as a sulfurtransferase that transfers sulfur from thiocarboxylated URM1 onto the uridine of tRNAs at wobble position. The polypeptide is Cytoplasmic tRNA 2-thiolation protein 1 (Drosophila mojavensis (Fruit fly)).